The following is a 370-amino-acid chain: MISYDKSLNYFSLYYRSNHLIMPDLISKREIGYIPFSGTMIRHLSFRNHREIESFVKRNTPRHLYYSSAYYIKPDEKRMEKKIWEGAELIFDLDADHIPGSDKMTYEEILLEVKKHVSRLLNYLINDFGFDDDSIKLYFSGGRGYHVHVVSDRVYSLDSDARREIGNYIKMEDFTIDNIIRASREKPESGPLKRFNEYISEIYSDENYLKRFYNGDFDRYYKSLDVYKDGKKKIDIMRENNYEKFKIVSKRDLDVLNNILNDFKDKYSAEIDEPVTTDVHRLIRFPGSLHGKTGLAVTPVNINEFDNFDPLISAVPEVFKDKYEHVYLNSDYMITMMNEKFSLNAGENKVPLYLALFLTGMKIGNFIEKK.

Active-site residues include Asp-92, Asp-94, and Asp-272.

Belongs to the eukaryotic-type primase small subunit family. In terms of assembly, heterodimer of a small subunit (PriS) and a large subunit (PriL). The cofactor is Mg(2+). It depends on Mn(2+) as a cofactor.

Functionally, catalytic subunit of DNA primase, an RNA polymerase that catalyzes the synthesis of short RNA molecules used as primers for DNA polymerase during DNA replication. The small subunit contains the primase catalytic core and has DNA synthesis activity on its own. Binding to the large subunit stabilizes and modulates the activity, increasing the rate of DNA synthesis while decreasing the length of the DNA fragments, and conferring RNA synthesis capability. The DNA polymerase activity may enable DNA primase to also catalyze primer extension after primer synthesis. May also play a role in DNA repair. The chain is DNA primase small subunit PriS from Picrophilus torridus (strain ATCC 700027 / DSM 9790 / JCM 10055 / NBRC 100828 / KAW 2/3).